The primary structure comprises 146 residues: Hemoglobin subunit beta (146 aa).

The Globin domain occupies 2–146 (HWSAEEKQLI…VAHALARKYH (145 aa)). Residues His63 and His92 each coordinate heme b.

This sequence belongs to the globin family. Heterotetramer of two alpha chains and two beta chains. As to expression, red blood cells.

Involved in oxygen transport from the lung to the various peripheral tissues. The chain is Hemoglobin subunit beta (HBB) from Columba livia (Rock dove).